The primary structure comprises 372 residues: 3-dehydroquinate synthase (372 aa).

NAD(+) is bound by residues 116-120 (GVVGD), 140-141 (TT), Lys153, Lys162, and 180-183 (TLKT). Zn(2+) is bound by residues Glu195, His260, and His277.

It belongs to the sugar phosphate cyclases superfamily. Dehydroquinate synthase family. NAD(+) is required as a cofactor. Requires Co(2+) as cofactor. Zn(2+) serves as cofactor.

It is found in the cytoplasm. The catalysed reaction is 7-phospho-2-dehydro-3-deoxy-D-arabino-heptonate = 3-dehydroquinate + phosphate. Its pathway is metabolic intermediate biosynthesis; chorismate biosynthesis; chorismate from D-erythrose 4-phosphate and phosphoenolpyruvate: step 2/7. Catalyzes the conversion of 3-deoxy-D-arabino-heptulosonate 7-phosphate (DAHP) to dehydroquinate (DHQ). The chain is 3-dehydroquinate synthase from Prochlorococcus marinus (strain MIT 9313).